Reading from the N-terminus, the 1004-residue chain is Bifunctional glutamine synthetase adenylyltransferase/adenylyl-removing enzyme (1004 aa).

The segment at 1 to 496 is adenylyl removase; the sequence is MVRPPSARSA…LHAKLFYRPL (496 aa). The tract at residues 502 to 1004 is adenylyl transferase; sequence RMDPDALRLS…RAVVERVFGS (503 aa).

The protein belongs to the GlnE family. Mg(2+) is required as a cofactor.

It carries out the reaction [glutamine synthetase]-O(4)-(5'-adenylyl)-L-tyrosine + phosphate = [glutamine synthetase]-L-tyrosine + ADP. The catalysed reaction is [glutamine synthetase]-L-tyrosine + ATP = [glutamine synthetase]-O(4)-(5'-adenylyl)-L-tyrosine + diphosphate. In terms of biological role, involved in the regulation of glutamine synthetase GlnA, a key enzyme in the process to assimilate ammonia. When cellular nitrogen levels are high, the C-terminal adenylyl transferase (AT) inactivates GlnA by covalent transfer of an adenylyl group from ATP to specific tyrosine residue of GlnA, thus reducing its activity. Conversely, when nitrogen levels are low, the N-terminal adenylyl removase (AR) activates GlnA by removing the adenylyl group by phosphorolysis, increasing its activity. The regulatory region of GlnE binds the signal transduction protein PII (GlnB) which indicates the nitrogen status of the cell. In Nocardia farcinica (strain IFM 10152), this protein is Bifunctional glutamine synthetase adenylyltransferase/adenylyl-removing enzyme.